Reading from the N-terminus, the 743-residue chain is Coiled-coil domain-containing protein 30 (743 aa).

Basic and acidic residues-rich tracts occupy residues 1–22 (MSQEKNEMFESEWSKEREREKQ) and 133–193 (SPKE…MKPE). 4 disordered regions span residues 1–25 (MSQEKNEMFESEWSKEREREKQLAS), 114–193 (ENIC…MKPE), 208–233 (SLLQSQSSGDSSDDSGAQYPSSGDKL), and 695–715 (SKEAMASSKSPEKSPENLVCS). 2 coiled-coil regions span residues 21–98 (KQLA…QLNH) and 165–580 (REGQ…LIHS). The segment covering 208-223 (SLLQSQSSGDSSDDSG) has biased composition (low complexity).

The protein belongs to the prefoldin subunit beta family.

This Macaca fascicularis (Crab-eating macaque) protein is Coiled-coil domain-containing protein 30 (CCDC30).